The primary structure comprises 262 residues: MIDKSAFIHPTAIVEDGAVLGANVHIGPFCIVGPQVEIGEGTVLKSHVVVNGQTKIGRDNEIYQFASIGEVNQDLKYAGEPTRVEIGDRNRIRESVTIHRGTVQGGGLTKVGSDNLLMINAHVAHDCTVGNRCILANNATLAGHVSIDDFAIIGGMTAVHQFCIIGAHVMVGGCSGVAQDVPPYVIAQGNHATPFGVNIEGLKRRGFSREGIVAIRNAYKLLYRSGKTLDDAKLEIAELAEKHPEVKAFTEFFERSTRGPIR.

This sequence belongs to the transferase hexapeptide repeat family. LpxA subfamily. Homotrimer.

Its subcellular location is the cytoplasm. The catalysed reaction is a (3R)-hydroxyacyl-[ACP] + UDP-N-acetyl-alpha-D-glucosamine = a UDP-3-O-[(3R)-3-hydroxyacyl]-N-acetyl-alpha-D-glucosamine + holo-[ACP]. The protein operates within glycolipid biosynthesis; lipid IV(A) biosynthesis; lipid IV(A) from (3R)-3-hydroxytetradecanoyl-[acyl-carrier-protein] and UDP-N-acetyl-alpha-D-glucosamine: step 1/6. Involved in the biosynthesis of lipid A, a phosphorylated glycolipid that anchors the lipopolysaccharide to the outer membrane of the cell. This Salmonella arizonae (strain ATCC BAA-731 / CDC346-86 / RSK2980) protein is Acyl-[acyl-carrier-protein]--UDP-N-acetylglucosamine O-acyltransferase.